The chain runs to 438 residues: MVQWKRLCQLHYLWALGCYMLLATVALKLSFRLKCDSDHLGLESRESQSQYCRNILYNFLKLPAKRSINCSGVTRGDQEAVLQAILNNLEVKKKREPFTDTHYLSLTRDCEHFKAERKFIQFPLSKEEVEFPIAYSMVIHEKIENFERLLRAVYAPQNIYCVHVDEKSPETFKEAVKAIISCFPNVFIASKLVRVVYASWSRVQADLNCMEDLLQSSVPWKYFLNTCGTDFPIKSNAEMVQALKMLNGRNSMESEVPPKHKETRWKYHFEVVRDTLHLTNKKKDPPPYNLTMFTGNAYIVASRDFVQHVLKNPKSQQLIEWVKDTYSPDEHLWATLQRARWMPGSVPNHPKYDISDMTSIARLVKWQGHEGDIDKGAPYAPCSGIHQRAICVYGAGDLNWMLQNHHLLANKFDPKVDDNALQCLEEYLRYKAIYGTEL.

Over 1 to 6 (MVQWKR) the chain is Cytoplasmic. A helical; Signal-anchor for type II membrane protein membrane pass occupies residues 7 to 26 (LCQLHYLWALGCYMLLATVA). The Lumenal segment spans residues 27 to 438 (LKLSFRLKCD…RYKAIYGTEL (412 aa)). Intrachain disulfides connect Cys70–Cys227, Cys161–Cys382, Cys182–Cys209, and Cys391–Cys423. N-linked (GlcNAc...) asparagine glycosylation is present at Asn289.

The protein belongs to the glycosyltransferase 14 family. Post-translationally, N-glycosylated. Primarily expressed in mucus-secreting tissues. Expressed in colon, kidney, small intestine, trachea, and stomach, where mucin is produced.

Its subcellular location is the golgi apparatus membrane. It carries out the reaction a 3-O-[beta-D-galactosyl-(1-&gt;3)-N-acetyl-alpha-D-galactosaminyl]-L-seryl-[protein] + UDP-N-acetyl-alpha-D-glucosamine = 3-O-{beta-D-galactosyl-(1-&gt;3)-[N-acetyl-beta-D-glucosaminyl-(1-&gt;6)]-N-acetyl-alpha-D-galactosaminyl}-L-seryl-[protein] + UDP + H(+). The catalysed reaction is a 3-O-[beta-D-galactosyl-(1-&gt;3)-N-acetyl-alpha-D-galactosaminyl]-L-threonyl-[protein] + UDP-N-acetyl-alpha-D-glucosamine = a 3-O-{beta-D-galactosyl-(1-&gt;3)-[N-acetyl-beta-D-glucosaminyl-(1-&gt;6)]-N-acetyl-alpha-D-galactosaminyl}-L-threonyl-[protein] + UDP + H(+). The enzyme catalyses a beta-D-Gal-(1-&gt;4)-beta-D-GlcNAc-(1-&gt;3)-beta-D-Gal-(1-&gt;4)-beta-D-GlcNAc derivative + UDP-N-acetyl-alpha-D-glucosamine = a beta-D-Gal-(1-&gt;4)-beta-D-GlcNAc-(1-&gt;3)-[beta-D-GlcNAc-(1-&gt;6)]-beta-D-Gal-(1-&gt;4)-N-acetyl-beta-D-glucosaminyl derivative + UDP + H(+). It catalyses the reaction 3-O-[N-acetyl-beta-D-glucosaminyl-(1-&gt;3)-N-acetyl-alpha-D-galactosaminyl]-L-seryl-[protein] + UDP-N-acetyl-alpha-D-glucosamine = 3-O-[N-acetyl-beta-D-glucosaminyl-(1-&gt;3)-[N-acetyl-beta-D-glucosaminyl-(1-&gt;6)]-N-acetyl-alpha-D-galactosaminyl]-L-seryl-[protein] + UDP + H(+). It carries out the reaction a 3-O-[N-acetyl-beta-D-glucosaminyl-(1-&gt;3)-N-acetyl-alpha-D-galactosaminyl]-L-threonyl-[protein] + UDP-N-acetyl-alpha-D-glucosamine = 3-O-[N-acetyl-beta-D-glucosaminyl-(1-&gt;3)-[N-acetyl-beta-D-glucosaminyl-(1-&gt;6)]-N-acetyl-alpha-D-galactosaminyl]-L-threonyl-[protein] + UDP + H(+). Its pathway is protein modification; protein glycosylation. Functionally, glycosyltransferase that can synthesize all known mucin beta 6 N-acetylglucosaminides. Mediates core 2 and core 4 O-glycan branching, 2 important steps in mucin-type biosynthesis. Also has I-branching enzyme activity by converting linear into branched poly-N-acetyllactosaminoglycans, leading to introduce the blood group I antigen during embryonic development. In Homo sapiens (Human), this protein is Beta-1,3-galactosyl-O-glycosyl-glycoprotein beta-1,6-N-acetylglucosaminyltransferase 3 (GCNT3).